The primary structure comprises 135 residues: UPF0738 protein Aflv_2116 (135 aa).

The protein belongs to the UPF0738 family.

The chain is UPF0738 protein Aflv_2116 from Anoxybacillus flavithermus (strain DSM 21510 / WK1).